Here is a 308-residue protein sequence, read N- to C-terminus: Glycine betaine uptake system ATP-binding protein YehX (308 aa).

The ABC transporter domain occupies 2 to 235; it reads IEFSHVSKLF…PANDFVRQFF (234 aa). 34-41 serves as a coordination point for ATP; that stretch reads GTSGSGKS.

This sequence belongs to the ABC transporter superfamily. In terms of assembly, the complex is composed of two ATP-binding proteins (YehX), two transmembrane proteins (YehW and YehY) and a solute-binding protein (YehZ).

The catalysed reaction is glycine betaine(out) + ATP + H2O = glycine betaine(in) + ADP + phosphate + H(+). Functionally, part of an ABC transporter complex involved in low-affinity glycine betaine uptake. Probably responsible for energy coupling to the transport system. The polypeptide is Glycine betaine uptake system ATP-binding protein YehX (yehX) (Escherichia coli (strain K12)).